Here is a 338-residue protein sequence, read N- to C-terminus: Lipoate-protein ligase A (338 aa).

The BPL/LPL catalytic domain maps to 29 to 216 (PATQRVLFLW…AFFAHYGERV (188 aa)). ATP contacts are provided by residues arginine 71, 76 to 79 (GAVF), and lysine 134. Lysine 134 contacts (R)-lipoate.

The protein belongs to the LplA family. In terms of assembly, monomer.

It localises to the cytoplasm. The enzyme catalyses L-lysyl-[lipoyl-carrier protein] + (R)-lipoate + ATP = N(6)-[(R)-lipoyl]-L-lysyl-[lipoyl-carrier protein] + AMP + diphosphate + H(+). The protein operates within protein modification; protein lipoylation via exogenous pathway; protein N(6)-(lipoyl)lysine from lipoate: step 1/2. It participates in protein modification; protein lipoylation via exogenous pathway; protein N(6)-(lipoyl)lysine from lipoate: step 2/2. Its function is as follows. Catalyzes both the ATP-dependent activation of exogenously supplied lipoate to lipoyl-AMP and the transfer of the activated lipoyl onto the lipoyl domains of lipoate-dependent enzymes. The polypeptide is Lipoate-protein ligase A (Escherichia coli (strain 55989 / EAEC)).